We begin with the raw amino-acid sequence, 496 residues long: NADH-quinone oxidoreductase subunit N (496 aa).

A run of 14 helical transmembrane segments spans residues 12–32, 43–63, 79–99, 108–128, 132–152, 166–186, 207–227, 257–277, 280–300, 306–326, 333–353, 383–403, 416–436, and 464–484; these read LNLITLAPMLVAIAGGLIILI, SLYVMLTILILVIDFGATLGL, VSIVSQLLIIVASILFTPLAL, SYPEFFALFLFMVAGFQFMVA, LILIFVGLETASLSLYTLIAL, FTMGALAAAFFAMGSAVIYAL, GLMIAIFGSSVLLLVAFAFKL, VAAFVVSIRIFGMYIDLGVEW, VVILVLAVLTMTLANLMALVQ, MLAYSSISHAGFIIAALALDT, IFFYYGLFMFTNLGAFAMLWM, AVIMAIFMLSLAGVPPFSIFW, GYVWLAIVMGLNSAIAAYYYL, and AVVGFAAVATIAAIFYVQPLV.

The protein belongs to the complex I subunit 2 family. As to quaternary structure, NDH-1 is composed of 14 different subunits. Subunits NuoA, H, J, K, L, M, N constitute the membrane sector of the complex.

The protein localises to the cell inner membrane. The catalysed reaction is a quinone + NADH + 5 H(+)(in) = a quinol + NAD(+) + 4 H(+)(out). Its function is as follows. NDH-1 shuttles electrons from NADH, via FMN and iron-sulfur (Fe-S) centers, to quinones in the respiratory chain. The immediate electron acceptor for the enzyme in this species is believed to be ubiquinone. Couples the redox reaction to proton translocation (for every two electrons transferred, four hydrogen ions are translocated across the cytoplasmic membrane), and thus conserves the redox energy in a proton gradient. In Sulfurovum sp. (strain NBC37-1), this protein is NADH-quinone oxidoreductase subunit N.